Consider the following 378-residue polypeptide: UPF0754 membrane protein BCQ_0944 (378 aa).

2 helical membrane passes run 1–21 (MNIWLSMLTTTGLGAIIGGFT) and 357–377 (YLGALLGGMIGIVQGLLLLFL).

The protein belongs to the UPF0754 family.

It is found in the cell membrane. This chain is UPF0754 membrane protein BCQ_0944, found in Bacillus cereus (strain Q1).